A 346-amino-acid polypeptide reads, in one-letter code: Methylthioribose-1-phosphate isomerase (346 aa).

Residues 44 to 46 (RGA), arginine 87, and glutamine 194 each bind substrate. Aspartate 235 acts as the Proton donor in catalysis. 245–246 (NK) serves as a coordination point for substrate.

The protein belongs to the eIF-2B alpha/beta/delta subunits family. MtnA subfamily.

It catalyses the reaction 5-(methylsulfanyl)-alpha-D-ribose 1-phosphate = 5-(methylsulfanyl)-D-ribulose 1-phosphate. It participates in amino-acid biosynthesis; L-methionine biosynthesis via salvage pathway; L-methionine from S-methyl-5-thio-alpha-D-ribose 1-phosphate: step 1/6. Its function is as follows. Catalyzes the interconversion of methylthioribose-1-phosphate (MTR-1-P) into methylthioribulose-1-phosphate (MTRu-1-P). The sequence is that of Methylthioribose-1-phosphate isomerase from Desulforamulus reducens (strain ATCC BAA-1160 / DSM 100696 / MI-1) (Desulfotomaculum reducens).